A 355-amino-acid chain; its full sequence is Eukaryotic initiation factor 4A-13 (355 aa).

The Q motif motif lies at 40–68 (DSFDAMGLQENLLRGIYAYGFEKPSAIQQ). The Helicase ATP-binding domain occupies 71-241 (IVPFCKGLDV…RKFMNQPVRI (171 aa)). 84-91 (AQSGTGKT) is a binding site for ATP. Residues 189 to 192 (DEAD) carry the DEAD box motif. One can recognise a Helicase C-terminal domain in the interval 252-355 (GIKQFYVNVD…QQVSLVINYD (104 aa)).

Belongs to the DEAD box helicase family. eIF4A subfamily. EIF4F is a multi-subunit complex, the composition of which varies with external and internal environmental conditions. It is composed of at least EIF4A, EIF4E and EIF4G.

The catalysed reaction is ATP + H2O = ADP + phosphate + H(+). Functionally, ATP-dependent RNA helicase which is a subunit of the eIF4F complex involved in cap recognition and is required for mRNA binding to ribosome. In the current model of translation initiation, eIF4A unwinds RNA secondary structures in the 5'-UTR of mRNAs which is necessary to allow efficient binding of the small ribosomal subunit, and subsequent scanning for the initiator codon. This chain is Eukaryotic initiation factor 4A-13, found in Nicotiana tabacum (Common tobacco).